Here is a 332-residue protein sequence, read N- to C-terminus: L-lactate dehydrogenase A chain (332 aa).

Residues 29 to 57 and arginine 99 each bind NAD(+); that span reads GAVG…VEDK. Substrate-binding residues include arginine 106, asparagine 138, and arginine 169. Asparagine 138 provides a ligand contact to NAD(+). Catalysis depends on histidine 193, which acts as the Proton acceptor. Threonine 248 contributes to the substrate binding site.

The protein belongs to the LDH/MDH superfamily. LDH family. As to quaternary structure, homotetramer.

It is found in the cytoplasm. The catalysed reaction is (S)-lactate + NAD(+) = pyruvate + NADH + H(+). The protein operates within fermentation; pyruvate fermentation to lactate; (S)-lactate from pyruvate: step 1/1. Functionally, interconverts simultaneously and stereospecifically pyruvate and lactate with concomitant interconversion of NADH and NAD(+). The protein is L-lactate dehydrogenase A chain (LDHA) of Columba livia (Rock dove).